A 72-amino-acid polypeptide reads, in one-letter code: UPF0270 protein YheU (72 aa).

Belongs to the UPF0270 family.

This is UPF0270 protein YheU from Shigella flexneri serotype 5b (strain 8401).